The chain runs to 216 residues: Outer-membrane lipoprotein LolB (216 aa).

Positions 1 to 24 (MNNLNYFTKISASCAALALMTLAG) are cleaved as a signal peptide. The N-palmitoyl cysteine moiety is linked to residue C25. C25 carries the S-diacylglycerol cysteine lipid modification.

It belongs to the LolB family. Monomer.

It is found in the cell outer membrane. In terms of biological role, plays a critical role in the incorporation of lipoproteins in the outer membrane after they are released by the LolA protein. In Shewanella loihica (strain ATCC BAA-1088 / PV-4), this protein is Outer-membrane lipoprotein LolB.